Consider the following 285-residue polypeptide: 1,4-dihydroxy-2-naphthoyl-CoA synthase (285 aa).

Substrate contacts are provided by residues R45, 84–88, Y97, 129–133, T155, S161, Y258, and K273; these read SGGDQ and YAIGG. 154–156 provides a ligand contact to hydrogencarbonate; sequence QTG.

Belongs to the enoyl-CoA hydratase/isomerase family. MenB subfamily. The cofactor is hydrogencarbonate.

The catalysed reaction is 2-succinylbenzoyl-CoA + H(+) = 1,4-dihydroxy-2-naphthoyl-CoA + H2O. It functions in the pathway quinol/quinone metabolism; 1,4-dihydroxy-2-naphthoate biosynthesis; 1,4-dihydroxy-2-naphthoate from chorismate: step 6/7. Its pathway is quinol/quinone metabolism; menaquinone biosynthesis. Its function is as follows. Converts o-succinylbenzoyl-CoA (OSB-CoA) to 1,4-dihydroxy-2-naphthoyl-CoA (DHNA-CoA). This is 1,4-dihydroxy-2-naphthoyl-CoA synthase from Haemophilus influenzae (strain ATCC 51907 / DSM 11121 / KW20 / Rd).